Reading from the N-terminus, the 200-residue chain is Recombination protein RecR (200 aa).

Residues 58-73 form a C4-type zinc finger; that stretch reads CSICGNITEDDPCPIC. A Toprim domain is found at 81–177; the sequence is SQILVVEQSQ…KVTRLAHGLS (97 aa).

Belongs to the RecR family.

Functionally, may play a role in DNA repair. It seems to be involved in an RecBC-independent recombinational process of DNA repair. It may act with RecF and RecO. The sequence is that of Recombination protein RecR from Limosilactobacillus reuteri (strain DSM 20016) (Lactobacillus reuteri).